The chain runs to 82 residues: Immediate early response 3-interacting protein 1 (82 aa).

The next 2 helical transmembrane spans lie at 2-22 and 62-82; these read AFTLYALIQTAILFTNAIAVL and VMRVPLIAVNSVCIVLLLLFG.

It belongs to the YOS1 family.

It is found in the endoplasmic reticulum membrane. Functionally, regulator of endoplasmic reticulum secretion that acts as a key determinant of brain size. Required for secretion of extracellular matrix proteins. Required for correct brain development by depositing sufficient extracellular matrix proteins for tissue integrity and the proliferation of neural progenitors. Acts as a regulator of the unfolded protein response (UPR). The sequence is that of Immediate early response 3-interacting protein 1 from Danio rerio (Zebrafish).